The chain runs to 300 residues: Pantoate kinase (300 aa).

The protein belongs to the GHMP kinase family. PoK subfamily. As to quaternary structure, homodimer.

It carries out the reaction (R)-pantoate + ATP = (R)-4-phosphopantoate + ADP + H(+). Its pathway is cofactor biosynthesis; coenzyme A biosynthesis. Moderately stimulated in the presence of potassium cations. Inhibited by increasing concentrations of pantoate. Activity is not affected by CoA/acetyl-CoA. Functionally, phosphorylates (R)-pantoate to form (R)-4-phosphopantoate in the CoA biosynthesis pathway. Displays broad nucleotide specificity and utilizes ATP, GTP, UTP, and CTP with comparable catalytic efficiencies. The chain is Pantoate kinase from Thermococcus kodakarensis (strain ATCC BAA-918 / JCM 12380 / KOD1) (Pyrococcus kodakaraensis (strain KOD1)).